A 458-amino-acid chain; its full sequence is UDP-N-acetylmuramate--L-alanine ligase (458 aa).

118 to 124 lines the ATP pocket; that stretch reads GTHGKTT.

It belongs to the MurCDEF family.

The protein resides in the cytoplasm. It catalyses the reaction UDP-N-acetyl-alpha-D-muramate + L-alanine + ATP = UDP-N-acetyl-alpha-D-muramoyl-L-alanine + ADP + phosphate + H(+). It participates in cell wall biogenesis; peptidoglycan biosynthesis. Its function is as follows. Cell wall formation. The polypeptide is UDP-N-acetylmuramate--L-alanine ligase (Clostridium botulinum (strain ATCC 19397 / Type A)).